Here is a 209-residue protein sequence, read N- to C-terminus: Small ribosomal subunit protein uS3 (209 aa).

Positions Ile-38–Lys-107 constitute a KH type-2 domain.

This sequence belongs to the universal ribosomal protein uS3 family. In terms of assembly, part of the 30S ribosomal subunit. Forms a tight complex with proteins S10 and S14.

Functionally, binds the lower part of the 30S subunit head. Binds mRNA in the 70S ribosome, positioning it for translation. This is Small ribosomal subunit protein uS3 from Thermosipho africanus (strain TCF52B).